A 467-amino-acid polypeptide reads, in one-letter code: Glycogen synthase (467 aa).

K15 lines the ADP-alpha-D-glucose pocket.

Belongs to the glycosyltransferase 1 family. Bacterial/plant glycogen synthase subfamily.

It catalyses the reaction [(1-&gt;4)-alpha-D-glucosyl](n) + ADP-alpha-D-glucose = [(1-&gt;4)-alpha-D-glucosyl](n+1) + ADP + H(+). The protein operates within glycan biosynthesis; glycogen biosynthesis. Synthesizes alpha-1,4-glucan chains using ADP-glucose. The sequence is that of Glycogen synthase from Desulfitobacterium hafniense (strain DSM 10664 / DCB-2).